Reading from the N-terminus, the 140-residue chain is Large ribosomal subunit protein uL11 (140 aa).

Belongs to the universal ribosomal protein uL11 family. Part of the ribosomal stalk of the 50S ribosomal subunit. Interacts with L10 and the large rRNA to form the base of the stalk. L10 forms an elongated spine to which L12 dimers bind in a sequential fashion forming a multimeric L10(L12)X complex. One or more lysine residues are methylated.

Forms part of the ribosomal stalk which helps the ribosome interact with GTP-bound translation factors. This Geobacter metallireducens (strain ATCC 53774 / DSM 7210 / GS-15) protein is Large ribosomal subunit protein uL11.